Here is a 246-residue protein sequence, read N- to C-terminus: 4-hydroxy-tetrahydrodipicolinate reductase (246 aa).

7–12 (GCSGRM) provides a ligand contact to NAD(+). R34 is a binding site for NADP(+). NAD(+) contacts are provided by residues 76–78 (ATT) and 102–105 (CPNT). The Proton donor/acceptor role is filled by H135. H136 contacts (S)-2,3,4,5-tetrahydrodipicolinate. Residue K139 is the Proton donor of the active site. 145 to 146 (GT) is a (S)-2,3,4,5-tetrahydrodipicolinate binding site.

Belongs to the DapB family.

The protein localises to the cytoplasm. The enzyme catalyses (S)-2,3,4,5-tetrahydrodipicolinate + NAD(+) + H2O = (2S,4S)-4-hydroxy-2,3,4,5-tetrahydrodipicolinate + NADH + H(+). It carries out the reaction (S)-2,3,4,5-tetrahydrodipicolinate + NADP(+) + H2O = (2S,4S)-4-hydroxy-2,3,4,5-tetrahydrodipicolinate + NADPH + H(+). The protein operates within amino-acid biosynthesis; L-lysine biosynthesis via DAP pathway; (S)-tetrahydrodipicolinate from L-aspartate: step 4/4. Catalyzes the conversion of 4-hydroxy-tetrahydrodipicolinate (HTPA) to tetrahydrodipicolinate. The polypeptide is 4-hydroxy-tetrahydrodipicolinate reductase (Chlamydia abortus (strain DSM 27085 / S26/3) (Chlamydophila abortus)).